Here is a 306-residue protein sequence, read N- to C-terminus: Ribosomal RNA small subunit methyltransferase H (306 aa).

Residues 33–35, Asp51, Phe78, Asp96, and Gln103 contribute to the S-adenosyl-L-methionine site; that span reads GGY.

The protein belongs to the methyltransferase superfamily. RsmH family.

It localises to the cytoplasm. The catalysed reaction is cytidine(1402) in 16S rRNA + S-adenosyl-L-methionine = N(4)-methylcytidine(1402) in 16S rRNA + S-adenosyl-L-homocysteine + H(+). In terms of biological role, specifically methylates the N4 position of cytidine in position 1402 (C1402) of 16S rRNA. This is Ribosomal RNA small subunit methyltransferase H from Rickettsia prowazekii (strain Madrid E).